A 67-amino-acid polypeptide reads, in one-letter code: Large ribosomal subunit protein bL35 (67 aa).

The span at 1 to 16 (MPKMKTKSSAKKRFRV) shows a compositional bias: basic residues. The interval 1–24 (MPKMKTKSSAKKRFRVRPGGTVKR) is disordered.

The protein belongs to the bacterial ribosomal protein bL35 family.

The sequence is that of Large ribosomal subunit protein bL35 from Delftia acidovorans (strain DSM 14801 / SPH-1).